Consider the following 635-residue polypeptide: Probable Xaa-Pro aminopeptidase P (635 aa).

Positions 432, 443, 541, and 555 each coordinate Mn(2+).

Belongs to the peptidase M24B family. Requires Mn(2+) as cofactor.

It carries out the reaction Release of any N-terminal amino acid, including proline, that is linked to proline, even from a dipeptide or tripeptide.. In terms of biological role, catalyzes the removal of a penultimate prolyl residue from the N-termini of peptides. The sequence is that of Probable Xaa-Pro aminopeptidase P (AMPP) from Arthroderma gypseum (strain ATCC MYA-4604 / CBS 118893) (Microsporum gypseum).